The chain runs to 1048 residues: Self-sufficient cytochrome P450 monooxygenase CYP505E4 (1048 aa).

C405 contributes to the heme binding site. Residues 499–640 form the Flavodoxin-like domain; it reads VSFFYGSNSG…DLEVWEETNL (142 aa). Residues 505-509 and 584-616 contribute to the FMN site; these read SNSGT and VFGC…TRLA. One can recognise an FAD-binding FR-type domain in the interval 678 to 906; the sequence is RDLIEAKVTA…RPAKDAFHLP (229 aa).

This sequence in the N-terminal section; belongs to the cytochrome P450 family. Requires FAD as cofactor. It depends on FMN as a cofactor. The cofactor is heme.

It carries out the reaction 2 oxidized [cytochrome P450] + NADPH = 2 reduced [cytochrome P450] + NADP(+) + H(+). It catalyses the reaction an organic molecule + reduced [NADPH--hemoprotein reductase] + O2 = an alcohol + oxidized [NADPH--hemoprotein reductase] + H2O + H(+). The enzyme catalyses dodecanoate + reduced [NADPH--hemoprotein reductase] + O2 = 5-hydroxydodecanoate + oxidized [NADPH--hemoprotein reductase] + H2O + H(+). The catalysed reaction is tetradecanoate + reduced [NADPH--hemoprotein reductase] + O2 = 7-hydroxytetradecanoate + oxidized [NADPH--hemoprotein reductase] + H2O + H(+). It carries out the reaction dodecan-1-ol + reduced [NADPH--hemoprotein reductase] + O2 = 1,5-dodecanediol + oxidized [NADPH--hemoprotein reductase] + H2O + H(+). It catalyses the reaction dodecan-1-ol + reduced [NADPH--hemoprotein reductase] + O2 = 1,4-dodecanediol + oxidized [NADPH--hemoprotein reductase] + H2O + H(+). The enzyme catalyses dodecan-1-ol + reduced [NADPH--hemoprotein reductase] + O2 = 1,6-dodecanediol + oxidized [NADPH--hemoprotein reductase] + H2O + H(+). Functionally, self-sufficient cytochrome P450 monooxygenase that catalyzes the regioselective in-chain hydroxylation of alkanes, fatty alcohols, and fatty acids at the omega-7 position. Performs hydroxylation of C10-C16 n-alkanes and C12 and C14 fatty alcohols; and thereby enables the one step biocatalytic synthesis of rare alcohols such as 5-dodecanol and 7-tetradecanol. Converts 1-dodecanol into 1,5-dodecanediol as major product with very little sub-terminally hydroxylated products with the 1,4-dodecanediol and 1,6-dodecanediol more abundant. Converts dodecanoic acid to 5-hydroxydodecanoic acid which can be further converted into delta-dodecalactone by lactonization of the 5-hydroxy acid at low pH. Also gives sub-terminal hydroxylation of dodecanoic acid with 9-hydroxydodecanoic acid being the second most abundant product. This chain is Self-sufficient cytochrome P450 monooxygenase CYP505E4, found in Penicillium expansum (Blue mold rot fungus).